The chain runs to 401 residues: Probable plasmid-partitioning protein ParB (401 aa).

Residues 232–272 form a disordered region; it reads KTRGKENARDKAAAVKEEVKPSKKPKADNGEKTPKGRSHEE.

It belongs to the ParB family.

This Xylella fastidiosa (strain 9a5c) protein is Probable plasmid-partitioning protein ParB.